A 180-amino-acid chain; its full sequence is UPF0227 protein ECA1814 (180 aa).

Belongs to the UPF0227 family.

This chain is UPF0227 protein ECA1814, found in Pectobacterium atrosepticum (strain SCRI 1043 / ATCC BAA-672) (Erwinia carotovora subsp. atroseptica).